The sequence spans 107 residues: Phosphoribosyl-ATP pyrophosphatase (107 aa).

The protein belongs to the PRA-PH family.

The protein localises to the cytoplasm. The enzyme catalyses 1-(5-phospho-beta-D-ribosyl)-ATP + H2O = 1-(5-phospho-beta-D-ribosyl)-5'-AMP + diphosphate + H(+). Its pathway is amino-acid biosynthesis; L-histidine biosynthesis; L-histidine from 5-phospho-alpha-D-ribose 1-diphosphate: step 2/9. This Agrobacterium fabrum (strain C58 / ATCC 33970) (Agrobacterium tumefaciens (strain C58)) protein is Phosphoribosyl-ATP pyrophosphatase (hisE).